We begin with the raw amino-acid sequence, 499 residues long: MFCHLRPLRRFGLRKVLPHWLHYSRALSGAEAINALRPFYFAVHPDFFGQHPREREVNENSLKRLSVYLENLQKPGFKSLKPTQLTFYIREKTAQNSSEGQEPISTTGFRAVRFTLHSSDLLSTVLYILNSCSLPVEHVQSLNTNVHSQPLKEATGMPDRPIKWHRSYYSFTGFKDPDEDLTHVSRVETTLTSWLGSNGKGAVKKLRNSLPLRKELDRLKNELSELLQLSDIRWQRGWGVAHRCSQLHSLSRLAQQNPGPLQNVKGCTVVFTDRSGMSALGHVMLGTMDVHHHWTRLFESLPSYFDLQRRMSALEAQISNLLGGIQVVYIEELQPALTLDQYYSLLHTFYNQLLRSRVPPHPHPQSLSGLQMILSSDRYAPSLHELGHFDIPALSDPASLQSFMRTKAQQARENMTRREKLKVMENELIQASTKQFSLEKLYKEPSISSRQMVDCCKRLLEQSLPYLHGMHLCVSHFYSVMQDGDLCIPWNWKKGEAMK.

Residues 206–233 (LRNSLPLRKELDRLKNELSELLQLSDIR) adopt a coiled-coil conformation.

As to expression, expressed in peripheral blood leukocytes, mainly in T-lymphocytes.

The protein localises to the mitochondrion. Functionally, may regulate T-cell apoptosis. This is T-cell activation inhibitor, mitochondrial (TCAIM) from Mus musculus (Mouse).